The following is a 235-amino-acid chain: 2-C-methyl-D-erythritol 4-phosphate cytidylyltransferase (235 aa).

It belongs to the IspD/TarI cytidylyltransferase family. IspD subfamily. Homodimer.

It carries out the reaction 2-C-methyl-D-erythritol 4-phosphate + CTP + H(+) = 4-CDP-2-C-methyl-D-erythritol + diphosphate. It functions in the pathway isoprenoid biosynthesis; isopentenyl diphosphate biosynthesis via DXP pathway; isopentenyl diphosphate from 1-deoxy-D-xylulose 5-phosphate: step 2/6. Catalyzes the formation of 4-diphosphocytidyl-2-C-methyl-D-erythritol from CTP and 2-C-methyl-D-erythritol 4-phosphate (MEP). The polypeptide is 2-C-methyl-D-erythritol 4-phosphate cytidylyltransferase (Blochmanniella pennsylvanica (strain BPEN)).